A 715-amino-acid chain; its full sequence is SANT and BTB domain regulator of class switch recombination (715 aa).

In terms of domain architecture, SANT spans 21–59 (DMILCSLVGVPQPISWDSVARLVPGYTPKECAKRFEELK). The BTB domain occupies 146–254 (MVIHVCDEAK…ECIRYCHKNM (109 aa)). The segment covering 552–573 (SEEEDYTTGSEVTEDEVGDEEE) has biased composition (acidic residues). Disordered stretches follow at residues 552–623 (SEEE…VSLQ) and 689–715 (SAHS…GRPT). Basic residues predominate over residues 578–605 (QAGRKVKPKRSAKQTKKHISSPSIHKKE). 2 stretches are compositionally biased toward polar residues: residues 614–623 (DSSPFTVSLQ) and 690–699 (AHSNTRQMNT).

This sequence belongs to the KIAA1841 family. As to quaternary structure, homodimer.

Its function is as follows. Negatively regulates class switch recombination or isotype switching in splenic B-cells. The protein is SANT and BTB domain regulator of class switch recombination of Xenopus laevis (African clawed frog).